Consider the following 98-residue polypeptide: NADH-ubiquinone oxidoreductase chain 4L (98 aa).

A run of 3 helical transmembrane segments spans residues 1–21 (MMSI…GVLI), 28–48 (STLL…ALLI), and 59–79 (APLI…ALLV).

It belongs to the complex I subunit 4L family. As to quaternary structure, core subunit of respiratory chain NADH dehydrogenase (Complex I) which is composed of 45 different subunits.

It localises to the mitochondrion inner membrane. It catalyses the reaction a ubiquinone + NADH + 5 H(+)(in) = a ubiquinol + NAD(+) + 4 H(+)(out). Functionally, core subunit of the mitochondrial membrane respiratory chain NADH dehydrogenase (Complex I) which catalyzes electron transfer from NADH through the respiratory chain, using ubiquinone as an electron acceptor. Part of the enzyme membrane arm which is embedded in the lipid bilayer and involved in proton translocation. This chain is NADH-ubiquinone oxidoreductase chain 4L (MT-ND4L), found in Osphranter robustus (Wallaroo).